Here is a 264-residue protein sequence, read N- to C-terminus: Thymidylate synthase (264 aa).

DUMP contacts are provided by residues Arg-21 and 126–127; that span reads RR. Cys-146 serves as the catalytic Nucleophile. DUMP contacts are provided by residues 166–169, Asn-177, and 207–209; these read RSAD and HLY. Asp-169 contributes to the (6R)-5,10-methylene-5,6,7,8-tetrahydrofolate binding site. Ala-263 is a binding site for (6R)-5,10-methylene-5,6,7,8-tetrahydrofolate.

The protein belongs to the thymidylate synthase family. Bacterial-type ThyA subfamily. Homodimer.

Its subcellular location is the cytoplasm. The enzyme catalyses dUMP + (6R)-5,10-methylene-5,6,7,8-tetrahydrofolate = 7,8-dihydrofolate + dTMP. It participates in pyrimidine metabolism; dTTP biosynthesis. Its function is as follows. Catalyzes the reductive methylation of 2'-deoxyuridine-5'-monophosphate (dUMP) to 2'-deoxythymidine-5'-monophosphate (dTMP) while utilizing 5,10-methylenetetrahydrofolate (mTHF) as the methyl donor and reductant in the reaction, yielding dihydrofolate (DHF) as a by-product. This enzymatic reaction provides an intracellular de novo source of dTMP, an essential precursor for DNA biosynthesis. This is Thymidylate synthase from Rhodopseudomonas palustris (strain ATCC BAA-98 / CGA009).